A 204-amino-acid polypeptide reads, in one-letter code: Holliday junction branch migration complex subunit RuvA (204 aa).

The domain I stretch occupies residues 1-64 (MIGKLKGTID…EDQLKLFGFM (64 aa)). The domain II stretch occupies residues 65-143 (TALEREWFNL…AFAGEAINIA (79 aa)). The segment at 144–151 (LKQELGEG) is flexible linker. Residues 152–204 (VAAAPVADAVSALTNLGYSRDQAANAVAAAMKTAGDDADSAKLIRLGLKELAR) form a domain III region.

This sequence belongs to the RuvA family. As to quaternary structure, homotetramer. Forms an RuvA(8)-RuvB(12)-Holliday junction (HJ) complex. HJ DNA is sandwiched between 2 RuvA tetramers; dsDNA enters through RuvA and exits via RuvB. An RuvB hexamer assembles on each DNA strand where it exits the tetramer. Each RuvB hexamer is contacted by two RuvA subunits (via domain III) on 2 adjacent RuvB subunits; this complex drives branch migration. In the full resolvosome a probable DNA-RuvA(4)-RuvB(12)-RuvC(2) complex forms which resolves the HJ.

The protein resides in the cytoplasm. The RuvA-RuvB-RuvC complex processes Holliday junction (HJ) DNA during genetic recombination and DNA repair, while the RuvA-RuvB complex plays an important role in the rescue of blocked DNA replication forks via replication fork reversal (RFR). RuvA specifically binds to HJ cruciform DNA, conferring on it an open structure. The RuvB hexamer acts as an ATP-dependent pump, pulling dsDNA into and through the RuvAB complex. HJ branch migration allows RuvC to scan DNA until it finds its consensus sequence, where it cleaves and resolves the cruciform DNA. This is Holliday junction branch migration complex subunit RuvA from Rhizobium leguminosarum bv. trifolii (strain WSM2304).